The sequence spans 245 residues: Uridylate kinase (245 aa).

20–23 (KLSG) is a binding site for ATP. G60 contacts UMP. Residues G61 and R65 each contribute to the ATP site. UMP is bound by residues D80 and 141-148 (AGLPYFST). ATP-binding residues include Y175 and D178.

The protein belongs to the UMP kinase family. As to quaternary structure, homohexamer.

Its subcellular location is the cytoplasm. It catalyses the reaction UMP + ATP = UDP + ADP. Its pathway is pyrimidine metabolism; CTP biosynthesis via de novo pathway; UDP from UMP (UMPK route): step 1/1. Its activity is regulated as follows. Inhibited by UTP. Functionally, catalyzes the reversible phosphorylation of UMP to UDP. The chain is Uridylate kinase from Paenarthrobacter aurescens (strain TC1).